A 103-amino-acid polypeptide reads, in one-letter code: Small ribosomal subunit protein uS10 (103 aa).

This sequence belongs to the universal ribosomal protein uS10 family. Part of the 30S ribosomal subunit.

Its function is as follows. Involved in the binding of tRNA to the ribosomes. The chain is Small ribosomal subunit protein uS10 from Stutzerimonas stutzeri (strain A1501) (Pseudomonas stutzeri).